The following is a 238-amino-acid chain: Putative pectate lyase X (238 aa).

An N-terminal signal peptide occupies residues 1-22 (MKYLLPTAAAGLLLLAAQPAMA). Residues Asp153, Glu188, and Asp192 each contribute to the Ca(2+) site.

Belongs to the polysaccharide lyase 1 family. The cofactor is Ca(2+).

It catalyses the reaction Eliminative cleavage of (1-&gt;4)-alpha-D-galacturonan to give oligosaccharides with 4-deoxy-alpha-D-galact-4-enuronosyl groups at their non-reducing ends.. It functions in the pathway glycan metabolism; pectin degradation; 2-dehydro-3-deoxy-D-gluconate from pectin: step 2/5. Its function is as follows. Involved in maceration and soft-rotting of plant tissue. This Pectobacterium carotovorum (Erwinia carotovora) protein is Putative pectate lyase X (PEL X).